A 1410-amino-acid chain; its full sequence is Pogo transposable element with ZNF domain (1410 aa).

Residues 238-291 form a disordered region; it reads RSTVPQSQSQQTKSTPSTSTTPTATQPTSLGQLAVQSPGQSNQTTNPKLAPSFP. The span at 239–266 shows a compositional bias: low complexity; the sequence is STVPQSQSQQTKSTPSTSTTPTATQPTS. Over residues 267-284 the composition is skewed to polar residues; the sequence is LGQLAVQSPGQSNQTTNP. K319 is covalently cross-linked (Glycyl lysine isopeptide (Lys-Gly) (interchain with G-Cter in SUMO2)). Residues 332 to 361 form a disordered region; sequence QSPGPVVVSNNSSAHGSQRTSGPESSMKVT. S333 is modified (phosphoserine). The segment covering 345-361 has biased composition (polar residues); the sequence is AHGSQRTSGPESSMKVT. Residue K359 forms a Glycyl lysine isopeptide (Lys-Gly) (interchain with G-Cter in SUMO2) linkage. Position 363 is a phosphoserine (S363). A C2H2-type 1; atypical zinc finger spans residues 375 to 397; that stretch reads KICPRCNAQFRVTEALRGHMCYC. The interval 409 to 456 is disordered; sequence KSLDSEPSVPSAAKPPSPEKTAPVASTPSSTPIPALSPPTKVPEPNEN. A Glycyl lysine isopeptide (Lys-Gly) (interchain with G-Cter in SUMO2) cross-link involves residue K422. S425 is subject to Phosphoserine. T439 is modified (phosphothreonine). S445 carries the post-translational modification Phosphoserine. A Glycyl lysine isopeptide (Lys-Gly) (interchain with G-Cter in SUMO2) cross-link involves residue K449. Phosphothreonine is present on T463. K489 is covalently cross-linked (Glycyl lysine isopeptide (Lys-Gly) (interchain with G-Cter in SUMO2)). 6 consecutive C2H2-type zinc fingers follow at residues 494 to 516, 530 to 553, 560 to 583, 590 to 613, 619 to 641, and 647 to 670; these read FRCPHCTKRLKNNIRFMNHMKHH, TICQHCYRQFSTPFQLQCHLENVH, TKCKICEWAFESEPLFLQHMKDTH, YVCQVCQYRSSLYSEVDVHFRMIH, LLCPYCLKVFKNGNAFQQHYMRH, and YHCNKCRLQFLFAKDKIEHKLQHH. A Glycyl lysine isopeptide (Lys-Gly) (interchain with G-Cter in SUMO2) cross-link involves residue K629. K677 is covalently cross-linked (Glycyl lysine isopeptide (Lys-Gly) (interchain with G-Cter in SUMO2)). A disordered region spans residues 693-715; that stretch reads SRGQPRTVPVSSNDTPPSALQEA. The span at 701–710 shows a compositional bias: polar residues; that stretch reads PVSSNDTPPS. Residues 771 to 794 form a C2H2-type 8 zinc finger; it reads VHCSLCRYSTCCSRAYANHMINNH. K801 participates in a covalent cross-link: Glycyl lysine isopeptide (Lys-Gly) (interchain with G-Cter in SUMO2). The segment at 810-850 is required for interaction with CBX5; that stretch reads VSGIKLACTSCTFVTSVGDAMAKHLVFNPSHRSSSILPRGL. The C2H2-type 9 zinc finger occupies 815 to 840; it reads LACTSCTFVTSVGDAMAKHLVFNPSH. The residue at position 856 (S856) is a Phosphoserine. 2 disordered regions span residues 857-927 and 942-969; these read RHGQ…PQAL and VDDQDEGSPVTQEPELASGGGGSGGVGK. Over residues 860 to 870 the composition is skewed to basic and acidic residues; it reads QTRDRVHDRNV. K883 is covalently cross-linked (Glycyl lysine isopeptide (Lys-Gly) (interchain with G-Cter in SUMO2)). Positions 892–915 are enriched in low complexity; the sequence is ATPAEPEELLTPLAPALPSPASTA. The HTH CENPB-type domain occupies 1015–1085; that stretch reads GENLEGKYLS…MLRHHLTPHA (71 aa). A DDE-1 domain is found at 1117–1323; it reads LPLSMIVAID…DCPELVQRSF (207 aa). Residue S1338 is modified to Phosphoserine. Positions 1340–1360 form a coiled coil; that stretch reads TRNADMQEELIASLEEQLKLS. The disordered stretch occupies residues 1360–1400; sequence SGEHSESSTPRPRSSPEETIEPESLHQLFEGESETESFYGF. Residues S1364 and S1367 each carry the phosphoserine modification. A Phosphothreonine modification is found at T1368. 2 positions are modified to phosphoserine: S1373 and S1374. At T1378 the chain carries Phosphothreonine. The short motif at 1380 to 1404 is the Integrase domain-binding motif (IBM) element; the sequence is EPESLHQLFEGESETESFYGFEEAD. S1392 bears the Phosphoserine; by CK2 mark. Residue T1394 is modified to Phosphothreonine. A Phosphoserine; by CK2 modification is found at S1396.

In terms of assembly, interacts with CBX1, CBX3, MAD2L2 and CHAMP1. Interacts with CBX5; POGZ competes with PXVXL motif-containing proteins such as INCENP and TRIM28 for interaction with CBX5. Interacts (via IBM motif) with PSIP1 isoform 1 (via IBD domain); phosphorylation increases its affinity for PSIP1. Interacts with HDGFL2. Post-translationally, phosphorylation increases its interaction with PSIP1.

The protein localises to the nucleus. The protein resides in the chromosome. It localises to the cytoplasm. Plays a role in mitotic cell cycle progression and is involved in kinetochore assembly and mitotic sister chromatid cohesion. Probably through its association with CBX5 plays a role in mitotic chromosome segregation by regulating aurora kinase B/AURKB activation and AURKB and CBX5 dissociation from chromosome arms. Promotes the repair of DNA double-strand breaks through the homologous recombination pathway. The sequence is that of Pogo transposable element with ZNF domain (POGZ) from Homo sapiens (Human).